The chain runs to 345 residues: Adenosine kinase 2 (345 aa).

Residue D300 is part of the active site.

Belongs to the carbohydrate kinase PfkB family. As to quaternary structure, interacts with the begomovirus AL2 protein and the curtovirus L2 protein. Interacts with KIN11. The cofactor is Mg(2+). Post-translationally, phosphorylated by KIN11. As to expression, widely expressed.

It is found in the cytoplasm. The catalysed reaction is adenosine + ATP = AMP + ADP + H(+). Its pathway is purine metabolism; AMP biosynthesis via salvage pathway; AMP from adenosine: step 1/1. Its activity is regulated as follows. Inactivated by the begomovirus AL2 protein or the curtovirus L2 protein. Functionally, ATP dependent phosphorylation of adenosine and other related nucleoside analogs to monophosphate derivatives. Essential to sustain methyl recycling. The polypeptide is Adenosine kinase 2 (Arabidopsis thaliana (Mouse-ear cress)).